A 222-amino-acid chain; its full sequence is Charged multivesicular body protein 3 (222 aa).

Gly-2 carries N-myristoyl glycine lipidation. The segment at 2-113 (GLFGKTQEKP…LQKSTEVMKA (112 aa)) is intramolecular interaction with C-terminus. A coiled-coil region spans residues 22 to 54 (KIRKEMRVVDRQIRDIQREEEKVKRSVKDAAKK). Important for autoinhibitory function regions lie at residues 59–64 (VCVVLA) and 168–169 (IL). The stretch at 141–222 (EEMLEDTFES…MQSRLATLRS (82 aa)) forms a coiled coil. An intramolecular interaction with N-terminus region spans residues 151–220 (MDDQEEMEEE…EAMQSRLATL (70 aa)). Residues 151–222 (MDDQEEMEEE…MQSRLATLRS (72 aa)) form an interaction with VPS4A region. A Glycyl lysine isopeptide (Lys-Gly) (interchain with G-Cter in ubiquitin) cross-link involves residue Lys-179. Residues 180 to 222 (APSKVTDALPEPEPSGAMAASEDEEEEEEALEAMQSRLATLRS) form a disordered region. 3 interaction with STAMBP regions span residues 196–222 (AMAASEDEEEEEEALEAMQSRLATLRS), 203–207 (EEEEE), and 221–222 (RS). Position 200 is a phosphoserine (Ser-200). Residues 200-210 (SEDEEEEEEAL) show a composition bias toward acidic residues. The short motif at 201 to 211 (EDEEEEEEALE) is the MIT-interacting motif element.

Belongs to the SNF7 family. As to quaternary structure, probable core component of the endosomal sorting required for transport complex III (ESCRT-III). ESCRT-III components are thought to multimerize to form a flat lattice on the perimeter membrane of the endosome. Several assembly forms of ESCRT-III may exist that interact and act sequentially. Forms a metastable monomer in solution; its core structure (without part of the putative autoinhibitory C-terminal acidic region) oligomerizes into a flat lattice via two different dimerization interfaces. In vitro, heteromerizes with CHMP2A (but not CHMP4) to form helical tubular structures that expose membrane-interacting sites on the outside whereas VPS4B can associate on the inside of the tubule. May interact with IGFBP7; the relevance of such interaction however remains unclear. Interacts with CHMP2A. Interacts with CHMP4A; the interaction requires the release of CHMP4A autoinhibition. Interacts with VPS4A. Interacts with STAMBP; the interaction appears to relieve the autoinhibition of CHMP3. Interacts with VTA1.

It localises to the cytoplasm. The protein resides in the cytosol. It is found in the membrane. Its subcellular location is the endosome. The protein localises to the late endosome membrane. Probable core component of the endosomal sorting required for transport complex III (ESCRT-III) which is involved in multivesicular bodies (MVBs) formation and sorting of endosomal cargo proteins into MVBs. MVBs contain intraluminal vesicles (ILVs) that are generated by invagination and scission from the limiting membrane of the endosome and mostly are delivered to lysosomes enabling degradation of membrane proteins, such as stimulated growth factor receptors, lysosomal enzymes and lipids. The MVB pathway appears to require the sequential function of ESCRT-O, -I,-II and -III complexes. ESCRT-III proteins mostly dissociate from the invaginating membrane before the ILV is released. The ESCRT machinery also functions in topologically equivalent membrane fission events, such as the terminal stages of cytokinesis and the budding of enveloped viruses (lentiviruses). ESCRT-III proteins are believed to mediate the necessary vesicle extrusion and/or membrane fission activities, possibly in conjunction with the AAA ATPase VPS4. Selectively binds to phosphatidylinositol 3,5-bisphosphate PtdIns(3,5)P2 and PtdIns(3,4)P2 in preference to other phosphoinositides tested. Involved in late stages of cytokinesis. Plays a role in endosomal sorting/trafficking of EGF receptor. This Pongo abelii (Sumatran orangutan) protein is Charged multivesicular body protein 3 (CHMP3).